We begin with the raw amino-acid sequence, 419 residues long: MLYYLFNYLDQLDFPGAGMFKYVSFRSGLALILSLFISTAIGRRIIDKLQMLQIGETVRNLGLEGQMSKKGTPTMGGIIIIIAILIPTLLCAKLNNIYVILMLVTTVWLGALGFADDYIKVFKKNKEGMHGRFKIVGQVGLGLIVGLVLFMSPDVVIKENMEVRHDNVIEEVRYHTVETKSTKTTIPFLKNNNFDYANLVNWAGDYKEEAAWLVFVLMVIFVVTAVSNGANMTDGLDGLAAGTSAIIGVALGILAYMSSHFEFASFLNIMFIPGAEELVVYAAAFIGATVGFLWYNSYPAQVFMGDTGSLTLGGIIAVFAIIIRKELLIPILCGIFLVENISVMLQVAYFKYTKKKYGEGRRIFKMAPLHHHFQKPGNAGIQALIQKPFNVVPESKIVVRFWLIGIILAVMTIVTLKMR.

The next 10 membrane-spanning stretches (helical) occupy residues 22 to 42 (YVSF…TAIG), 72 to 92 (TPTM…LLCA), 94 to 114 (LNNI…ALGF), 135 to 155 (IVGQ…SPDV), 210 to 230 (AAWL…SNGA), 238 to 258 (GLAA…AYMS), 266 to 286 (FLNI…AAFI), 303 to 323 (FMGD…AIII), 327 to 347 (LLIP…MLQV), and 396 to 416 (KIVV…IVTL).

The protein belongs to the glycosyltransferase 4 family. MraY subfamily. It depends on Mg(2+) as a cofactor.

Its subcellular location is the cell inner membrane. It carries out the reaction UDP-N-acetyl-alpha-D-muramoyl-L-alanyl-gamma-D-glutamyl-meso-2,6-diaminopimeloyl-D-alanyl-D-alanine + di-trans,octa-cis-undecaprenyl phosphate = di-trans,octa-cis-undecaprenyl diphospho-N-acetyl-alpha-D-muramoyl-L-alanyl-D-glutamyl-meso-2,6-diaminopimeloyl-D-alanyl-D-alanine + UMP. The protein operates within cell wall biogenesis; peptidoglycan biosynthesis. Catalyzes the initial step of the lipid cycle reactions in the biosynthesis of the cell wall peptidoglycan: transfers peptidoglycan precursor phospho-MurNAc-pentapeptide from UDP-MurNAc-pentapeptide onto the lipid carrier undecaprenyl phosphate, yielding undecaprenyl-pyrophosphoryl-MurNAc-pentapeptide, known as lipid I. The sequence is that of Phospho-N-acetylmuramoyl-pentapeptide-transferase from Parabacteroides distasonis (strain ATCC 8503 / DSM 20701 / CIP 104284 / JCM 5825 / NCTC 11152).